The sequence spans 626 residues: Dynein, cytoplasmic 1, intermediate chain 2a (626 aa).

Residues 20-43 (QIREEKKRKEEERKKKEAELKKDA) are compositionally biased toward basic and acidic residues. Disordered stretches follow at residues 20–108 (QIRE…RTLH) and 142–197 (KEVV…HELT). Residues 82 to 99 (TAKSVGSPSEAGSQDSGD) show a composition bias toward polar residues. Positions 160–169 (KDEEDEEEET) are enriched in acidic residues. Residues 177 to 197 (ETEKEKPEEKQVEEALPHELT) show a composition bias toward basic and acidic residues. 7 WD repeats span residues 265 to 314 (SKQR…ATPE), 318 to 358 (HCQS…RTPV), 367 to 408 (AHTH…QPQD), 417 to 457 (SKSV…AGIS), 462 to 507 (GHHG…PLYS), 510 to 550 (DNSD…EVPT), and 556 to 595 (DGSP…AVPR).

This sequence belongs to the dynein intermediate chain family. In terms of assembly, homodimer. The cytoplasmic dynein 1 complex consists of two catalytic heavy chains (HCs) and a number of non-catalytic subunits presented by intermediate chains (ICs), light intermediate chains (LICs) and light chains (LCs); the composition seems to vary in respect to the IC, LIC and LC composition. The heavy chain homodimer serves as a scaffold for the probable homodimeric assembly of the respective non-catalytic subunits. The ICs and LICs bind directly to the HC dimer and the LCs assemble on the IC dimer.

It localises to the cytoplasm. The protein resides in the cytoskeleton. Functionally, acts as one of several non-catalytic accessory components of the cytoplasmic dynein 1 complex that are thought to be involved in linking dynein to cargos and to adapter proteins that regulate dynein function. Cytoplasmic dynein 1 acts as a motor for the intracellular retrograde motility of vesicles and organelles along microtubules. Plays a role in the development of anterior brain and cartilaginous structures. In Danio rerio (Zebrafish), this protein is Dynein, cytoplasmic 1, intermediate chain 2a (dync1i2a).